Here is a 590-residue protein sequence, read N- to C-terminus: Membrane protein insertase YidC (590 aa).

Transmembrane regions (helical) follow at residues 5 to 25 (SVIG…FMKP), 368 to 388 (GLII…LSLA), 433 to 453 (LGGC…FYVF), 483 to 503 (LPLY…TVFF), and 519 to 539 (IMMW…PAGL).

It belongs to the OXA1/ALB3/YidC family. Type 1 subfamily. Interacts with the Sec translocase complex via SecD. Specifically interacts with transmembrane segments of nascent integral membrane proteins during membrane integration.

It localises to the cell inner membrane. Required for the insertion and/or proper folding and/or complex formation of integral membrane proteins into the membrane. Involved in integration of membrane proteins that insert both dependently and independently of the Sec translocase complex, as well as at least some lipoproteins. Aids folding of multispanning membrane proteins. This Chlorobaculum tepidum (strain ATCC 49652 / DSM 12025 / NBRC 103806 / TLS) (Chlorobium tepidum) protein is Membrane protein insertase YidC.